The following is a 320-amino-acid chain: MSEEIITESIVKNFGSAETSVGEKQPKRKRSEVRAEKLKARKLQKAAEIVQKQKENRKILKDVSLKRLSKSLDRSLPSENTIDQISFNHAMSEEDASGYQIGDKHKNLLLYKLSSSSGSVFTENLYSTIQEFLSAQKVDIADSKNTYVFGSTFDKKSHALVKTSDSVRSLKYGSFVKACAPLFRFASGIIKAHAPHFHQALLKLELAPSALRFGVFPNFSLQSVSNGYMSMESNFSSIKYGFVVIIIVGELNDVELKIPAISHSLKLKDGSILVLRSSLLHQWYSLPKQSILYEIRLFAMSSLWHYEKNKSIKIAKKDDI.

Positions 16–36 (SAETSVGEKQPKRKRSEVRAE) are disordered.

It is found in the nucleus. The protein resides in the nucleolus. In terms of biological role, induces a stably inheritable state of calnexin independence called the Cin state when overexpressed. This is Calnexin-independence factor 1 (cif1) from Schizosaccharomyces pombe (strain 972 / ATCC 24843) (Fission yeast).